The sequence spans 178 residues: Caveolin-1 (178 aa).

Position 2 is an N-acetylserine (Ser-2). Ser-2 carries the phosphoserine modification. The required for homooligomerization stretch occupies residues 2–94; that stretch reads SGGKYVDSEG…WKASFTTFTV (93 aa). Over 2-104 the chain is Cytoplasmic; the sequence is SGGKYVDSEG…TKYWFYRLLS (103 aa). At Lys-5 the chain carries N6-acetyllysine; alternate. Lys-5 participates in a covalent cross-link: Glycyl lysine isopeptide (Lys-Gly) (interchain with G-Cter in ubiquitin); alternate. Position 6 is a phosphotyrosine (Tyr-6). Ser-9 carries the post-translational modification Phosphoserine. A Phosphotyrosine; by ABL1 and INSR modification is found at Tyr-14. Residue Tyr-25 is modified to Phosphotyrosine. Residues Lys-26, Lys-30, Lys-39, Lys-47, and Lys-57 each participate in a glycyl lysine isopeptide (Lys-Gly) (interchain with G-Cter in ubiquitin) cross-link. The tract at residues 82-94 is interaction with CAVIN3; that stretch reads DGIWKASFTTFTV. Positions 105–125 form an intramembrane region, helical; sequence TIFGIPMALIWGIYFAILSFL. The Cytoplasmic portion of the chain corresponds to 126–178; the sequence is HIWAVVPCIKSFLIEIQCISRVYSIYVHTFCDPLFEAIGKIFSNIRISTQKEI. The segment at 131 to 142 is interacts with SPRY1, SPRY2, SPRY3 and SPRY4; sequence VPCIKSFLIEIQ. S-palmitoyl cysteine attachment occurs at residues Cys-133, Cys-143, and Cys-156. Residues 149-160 form an interacts with SPRY1, SPRY2, and SPRY4 region; sequence SIYVHTFCDPLF. Positions 167–178 are interacts with SPRY1, SPRY2, SPRY3 and SPRY4; the sequence is FSNIRISTQKEI.

The protein belongs to the caveolin family. As to quaternary structure, homooligomer. Interacts (via the N-terminus) with DPP4; the interaction is direct. Forms a stable heterooligomeric complex with CAV2 that targets to lipid rafts and drives caveolae formation. Interacts with BMX, BTK, CTNNB1, CDH1, GLIPR2, JUP, NOSTRIN, SNAP25 and STX1A. Interacts with SLC7A9. Interacts with TGFBR1. Interacts with CTNNB1, CDH1 and JUP. Interacts with PACSIN2; this interaction induces membrane tubulation. Interacts with CAVIN3 (via leucine-zipper domain) in a cholesterol-sensitive manner. Interacts with EHD2 in a cholesterol-dependent manner. Interacts with CAVIN1. Forms a ternary complex with UBXN6 and VCP; mediates CAV1 targeting to lysosomes for degradation. Interacts with ABCG1; this interaction regulates ABCG1-mediated cholesterol efflux. Interacts with NEU3; this interaction enhances NEU3 sialidase activity within caveola. Interacts (via C-terminus) with SPRY1, SPRY2 (via C-terminus), SPRY3, and SPRY4. Interacts with IGFBP5; this interaction allows trafficking of IGFBP5 from the plasma membrane to the nucleus. Post-translationally, the N-terminus of both isoforms are blocked. Phosphorylated at Tyr-14 by ABL1 in response to oxidative stress. In terms of processing, ubiquitinated. Undergo monoubiquitination and multi- and/or polyubiquitination. Monoubiquitination of N-terminal lysines promotes integration in a ternary complex with UBXN6 and VCP which promotes oligomeric CAV1 targeting to lysosomes for degradation. Ubiquitinated by ZNRF1; leading to degradation and modulation of the TLR4-mediated immune response. In terms of tissue distribution, adipose tissue, lung, heart, skeletal muscle, stomach, small bowel, kidney, spleen and testis (at protein level).

The protein localises to the golgi apparatus membrane. It localises to the cell membrane. It is found in the membrane. Its subcellular location is the caveola. The protein resides in the membrane raft. The protein localises to the golgi apparatus. It localises to the trans-Golgi network. Its function is as follows. May act as a scaffolding protein within caveolar membranes. Forms a stable heterooligomeric complex with CAV2 that targets to lipid rafts and drives caveolae formation. Mediates the recruitment of CAVIN proteins (CAVIN1/2/3/4) to the caveolae. Interacts directly with G-protein alpha subunits and can functionally regulate their activity. Involved in the costimulatory signal essential for T-cell receptor (TCR)-mediated T-cell activation. Its binding to DPP4 induces T-cell proliferation and NF-kappa-B activation in a T-cell receptor/CD3-dependent manner. Recruits CTNNB1 to caveolar membranes and may regulate CTNNB1-mediated signaling through the Wnt pathway. Negatively regulates TGFB1-mediated activation of SMAD2/3 by mediating the internalization of TGFBR1 from membrane rafts leading to its subsequent degradation. Binds 20(S)-hydroxycholesterol (20(S)-OHC). This chain is Caveolin-1 (Cav1), found in Mus musculus (Mouse).